Consider the following 402-residue polypeptide: S-adenosylmethionine synthase (402 aa).

ATP is bound at residue 137–142 (GQGSAD).

The protein belongs to the AdoMet synthase 2 family. The cofactor is Mg(2+).

The enzyme catalyses L-methionine + ATP + H2O = S-adenosyl-L-methionine + phosphate + diphosphate. It functions in the pathway amino-acid biosynthesis; S-adenosyl-L-methionine biosynthesis; S-adenosyl-L-methionine from L-methionine: step 1/1. Its function is as follows. Catalyzes the formation of S-adenosylmethionine from methionine and ATP. The protein is S-adenosylmethionine synthase of Pyrobaculum islandicum (strain DSM 4184 / JCM 9189 / GEO3).